The chain runs to 430 residues: Vitamin B6 salvage pathway transcriptional repressor PtsJ (430 aa).

Positions 4-72 (GKTANEIFDS…GRNGTVIKGS (69 aa)) constitute an HTH gntR-type domain. A DNA-binding region (H-T-H motif) is located at residues 32 to 51 (VRELASELKVNRNTVAAAYK). Residues 70 to 95 (KGSPSPVALEGGDPHTPLHDLSGGNP) form a disordered region. Lys282 is subject to N6-(pyridoxal phosphate)lysine.

This sequence in the C-terminal section; belongs to the class-I pyridoxal-phosphate-dependent aminotransferase family. As to quaternary structure, homodimer in both apo- and holo-forms.

Acts as a transcriptional repressor of the pdxK gene, encoding a pyridoxal kinase involved in the vitamin B6 salvage pathway. Also represses transcription of its own gene. Binds to the ptsJ-pdxK intergenic region, but does not bind pdxY and pdxH promoters. Among all six B6 vitamers, only pyridoxal 5'-phosphate (PLP) clearly binds to the protein and acts as an effector molecule for PtsJ, inducing a protein conformational change that increases affinity for DNA. Thus, PLP stabilizes protein-DNA interactions, reinforcing repression. This Salmonella typhimurium (strain LT2 / SGSC1412 / ATCC 700720) protein is Vitamin B6 salvage pathway transcriptional repressor PtsJ.